The sequence spans 275 residues: Interleukin-2 receptor subunit alpha (275 aa).

The signal sequence occupies residues 1-21 (MEPSLLLWGILTFVVVHGHVT). Positions 22-84 (ELCDENPPDI…SWENQCRCIS (63 aa)) constitute a Sushi 1 domain. Residues 22 to 243 (ELCDENPPDI…ESFVFTTEYQ (222 aa)) are Extracellular-facing. Intrachain disulfides connect C24–C67, C49–C80, and C51–C82. N-linked (GlcNAc...) asparagine glycosylation is found at N60 and N70. Residues 91 to 118 (DGQIIPKPEEQKGKSPMGMQSQMQPTDQ) are disordered. Residues 108-118 (GMQSQMQPTDQ) show a composition bias toward polar residues. The region spanning 123–186 (GHCREPPPWE…WTQPRLQCLS (64 aa)) is the Sushi 2 domain. 2 disulfide bridges follow: C125–C168 and C152–C184. Residues 188–213 (RSDGWFPDDEEPQASTDAALGSDTSC) form a disordered region. Residues 244 to 262 (IAVAGCVLLLISIVLLSGL) traverse the membrane as a helical segment. Residues 263–275 (TWQRRWRKSRRTI) lie on the Cytoplasmic side of the membrane.

Non-covalent dimer of an alpha and a beta subunit. IL2R exists in 3 different forms: a high affinity dimer, an intermediate affinity monomer (beta subunit), and a low affinity monomer (alpha subunit). The high and intermediate affinity forms also associate with a gamma subunit.

It localises to the membrane. In terms of biological role, receptor for interleukin-2. The receptor is involved in the regulation of immune tolerance by controlling regulatory T cells (TREGs) activity. TREGs suppress the activation and expansion of autoreactive T-cells. In Felis catus (Cat), this protein is Interleukin-2 receptor subunit alpha (IL2RA).